Reading from the N-terminus, the 673-residue chain is Citrate exporter 1 (673 aa).

A disordered region spans residues 1-44 (MFNLNTKSSKEPEVTEVAVDSTPSSPVTRESSPESSPDNSAVDL). Residues 21 to 39 (STPSSPVTRESSPESSPDN) show a composition bias toward polar residues. Residues 67–87 (FLVFGAMAFCMLVSFMDQNGI) form a helical membrane-spanning segment. An N-linked (GlcNAc...) asparagine glycan is attached at N99. 4 helical membrane-spanning segments follow: residues 103-123 (TISW…VLYG), 133-153 (LVFM…ACAQ), 164-184 (FSGI…SDIV), and 194-214 (GILG…GAAF). A glycan (N-linked (GlcNAc...) asparagine) is linked at N217. Helical transmembrane passes span 222-242 (AIFY…FFIL), 261-281 (PGLF…AGGG), 292-312 (ISML…EGFF), 322-342 (IFGT…GIAY), 364-384 (AAGM…ISGQ), 393-413 (LEVI…KCFW), 419-439 (MALL…CFQP), and 465-485 (SFGG…SLKA). N526 carries N-linked (GlcNAc...) asparagine glycosylation. A helical membrane pass occupies residues 529 to 549 (HTVFVFLCPIVGACLLVTVFV). A compositionally biased stretch (basic and acidic residues) spans 564-596 (AKTVEDKDKDESGTDCEDMTKGEVLVSEKEGKL). Disordered stretches follow at residues 564 to 608 (AKTV…MHFG) and 636 to 673 (FPPM…IQEE). 2 N-linked (GlcNAc...) asparagine glycosylation sites follow: N599 and N662.

The protein belongs to the major facilitator superfamily.

The protein localises to the cell membrane. It carries out the reaction citrate(in) = citrate(out). Functionally, transmembrane transporter that exports citrate across the cell membrane. The chain is Citrate exporter 1 from Yarrowia lipolytica (strain CLIB 122 / E 150) (Yeast).